The chain runs to 92 residues: Acyl-CoA-binding domain-containing protein 6 (92 aa).

Positions 3–88 (LKEEFEEHAE…VKQLLEVAAS (86 aa)) constitute an ACB domain. Residues 30 to 34 (YGLYK), Lys52, Lys56, and Tyr75 contribute to the an acyl-CoA site.

It belongs to the ACBP family. Interacts with PDLP8. Mostly expressed in seeds, stems, and siliques, and, to a lower extent, in leaves, flowers, and roots (at protein level). Highly expressed in root and shoot phloem companion cells.

It localises to the cytoplasm. The protein localises to the cell membrane. In terms of biological role, binds medium- and long-chain acyl-CoA esters with very high affinity. May function as an intracellular carrier of acyl-CoA esters. Confers resistance to cold and freezing. Interacts with phosphatidylcholine and derivatives, but not phosphatidic acid and lysophosphatidylcholine. May be involved in phospholipid metabolism. In Arabidopsis thaliana (Mouse-ear cress), this protein is Acyl-CoA-binding domain-containing protein 6 (ACBP6).